The sequence spans 535 residues: MRLRNGTVATALAFITSFLTLSWYTTWQNGKEKLIAYQREFLALKERLRIAEHRISQRSSELNTIVQQFKRVGAETNGSKDALNKFSDNTLKLLKELTSKKSLQVPSIYYHLPHLLKNEGSLQPAVQIGNGRTGVSIVMGIPTVKREVKSYLIETLHSLIDNLYPEEKLDCVIVVFIGETDIDYVHGVVANLEKEFSKEISSGLVEVISPPESYYPDLTNLKETFGDSKERVRWRTKQNLDYCFLMMYAQEKGIYYIQLEDDIIVKQNYFNTIKNFALQLSSEEWMILEFSQLGFIGKMFQAPDLTLIVEFIFMFYKEKPIDWLLDHILWVKVCNPEKDAKHCDRQKANLRIHFRPSLFQHVGLHSSLSGKIQKLTDKDYMKPLLLKIHVNPPAEVSTSLKVYQGHTLEKTYMGEDFFWAITPIAGDYILFKFDKPVNVESYLFHSGNQEHPGDILLNTTVEVLPFKSEGLEISKETKDKRLEDGYFRIGKFENGVAEGMVDPSLNPISAFRLSVIQNSAVWAILNEIHIKKATN.

The Cytoplasmic segment spans residues 1–4 (MRLR). A helical; Signal-anchor for type II membrane protein membrane pass occupies residues 5 to 27 (NGTVATALAFITSFLTLSWYTTW). A coiled-coil region spans residues 28–63 (QNGKEKLIAYQREFLALKERLRIAEHRISQRSSELN). The Lumenal portion of the chain corresponds to 28–535 (QNGKEKLIAY…NEIHIKKATN (508 aa)). N-linked (GlcNAc...) asparagine glycans are attached at residues asparagine 77 and asparagine 458. Serine 474 carries the phosphoserine modification.

The protein belongs to the glycosyltransferase 54 family. A divalent metal cation serves as cofactor. Post-translationally, N-glycosylated.

Its subcellular location is the golgi apparatus membrane. The protein localises to the secreted. The enzyme catalyses N(4)-{beta-D-GlcNAc-(1-&gt;2)-alpha-D-Man-(1-&gt;3)-[beta-D-GlcNAc-(1-&gt;2)-alpha-D-Man-(1-&gt;6)]-beta-D-Man-(1-&gt;4)-beta-D-GlcNAc-(1-&gt;4)-beta-D-GlcNAc}-L-asparaginyl-[protein] + UDP-N-acetyl-alpha-D-glucosamine = N(4)-{beta-D-GlcNAc-(1-&gt;2)-[beta-D-GlcNAc-(1-&gt;4)]-alpha-D-Man-(1-&gt;3)-[beta-D-GlcNAc-(1-&gt;2)-alpha-D-Man-(1-&gt;6)]-beta-D-Man-(1-&gt;4)-beta-D-GlcNAc-(1-&gt;4)-beta-D-GlcNAc}-L-asparaginyl-[protein] + UDP + H(+). It catalyses the reaction an N(4)-{beta-D-GlcNAc-(1-&gt;2)-alpha-D-Man-(1-&gt;3)-[alpha-D-Man-(1-&gt;6)]-beta-D-Man-(1-&gt;4)-beta-D-GlcNAc-(1-&gt;4)-beta-D-GlcNAc}-L-asparaginyl-[protein] + UDP-N-acetyl-alpha-D-glucosamine = an N(4)-{beta-D-GlcNAc-(1-&gt;2)-[beta-D-GlcNAc-(1-&gt;4)]-alpha-D-Man-(1-&gt;3)-[alpha-D-Man-(1-&gt;6)]-beta-D-Man-(1-&gt;4)-beta-D-GlcNAc-(1-&gt;4)-beta-D-GlcNAc}-L-asparaginyl-[protein] + UDP + H(+). It carries out the reaction an N(4)-{beta-D-GlcNAc-(1-&gt;2)-alpha-D-Man-(1-&gt;3)-[beta-D-GlcNAc-(1-&gt;2)-[beta-D-GlcNAc-(1-&gt;6)]-alpha-D-Man-(1-&gt;6)]-beta-D-Man-(1-&gt;4)-beta-D-GlcNAc-(1-&gt;4)-beta-D-GlcNAc}-L-asparaginyl-[protein] + UDP-N-acetyl-alpha-D-glucosamine = an N(4)-{beta-D-GlcNAc-(1-&gt;2)-[beta-D-GlcNAc-(1-&gt;4)]-alpha-D-Man-(1-&gt;3)-[beta-D-GlcNAc-(1-&gt;2)-[beta-D-GlcNAc-(1-&gt;6)]-alpha-D-Man-(1-&gt;6)]-beta-D-Man-(1-&gt;4)-beta-D-GlcNAc-(1-&gt;4)-beta-D-GlcNAc}-L-asparaginyl-[protein] + UDP + H(+). The catalysed reaction is an N(4)-{beta-D-GlcNAc-(1-&gt;2)-alpha-D-Man-(1-&gt;3)-[beta-D-GlcNAc-(1-&gt;2)-alpha-D-Man-(1-&gt;6)]-beta-D-Man-(1-&gt;4)-beta-D-GlcNAc-(1-&gt;4)-[alpha-L-Fuc-(1-&gt;6)]-beta-D-GlcNAc}-L-asparaginyl-[protein] + UDP-N-acetyl-alpha-D-glucosamine = N(4)-{beta-D-GlcNAc-(1-&gt;2)-[beta-D-GlcNAc-(1-&gt;4)]-alpha-D-Man-(1-&gt;3)-[beta-D-GlcNAc-(1-&gt;2)-alpha-D-Man-(1-&gt;6)]-beta-D-Man-(1-&gt;4)-beta-D-GlcNAc-(1-&gt;4)-[alpha-L-Fuc-(1-&gt;6)]-beta-D-GlcNAc}-asparaginyl-[protein] + UDP + H(+). The enzyme catalyses an N(4)-{beta-D-GlcNAc-(1-&gt;2)-alpha-D-Man-(1-&gt;3)-[beta-D-Gal-(1-&gt;4)-beta-D-GlcNAc-(1-&gt;2)-alpha-D-Man-(1-&gt;6)]-beta-D-Man-(1-&gt;4)-beta-D-GlcNAc-(1-&gt;4)-beta-D-GlcNAc}-L-asparaginyl-[protein] + UDP-N-acetyl-alpha-D-glucosamine = an N(4)-{beta-D-GlcNAc-(1-&gt;2)-[beta-D-GlcNAc-(1-&gt;4)]-alpha-D-Man-(1-&gt;3)-[beta-D-Gal-(1-&gt;4)-beta-D-GlcNAc-(1-&gt;2)-alpha-D-Man-(1-&gt;6)]-beta-D-Man-(1-&gt;4)-beta-D-GlcNAc-(1-&gt;4)-beta-D-GlcNAc}-L-asparaginyl-[protein] + UDP + H(+). It catalyses the reaction N(4)-{beta-D-GlcNAc-(1-&gt;2)-alpha-D-Man-(1-&gt;3)-[alpha-D-Man-(1-&gt;3)-{alpha-D-Man-(1-&gt;6)}-alpha-D-Man-(1-&gt;6)]-beta-D-Man-(1-&gt;4)-beta-D-GlcNAc-(1-&gt;4)-beta-D-GlcNAc}-asparaginyl-[protein] + UDP-N-acetyl-alpha-D-glucosamine = N(4)-{beta-D-GlcNAc-(1-&gt;2)-[beta-D-GlcNAc-(1-&gt;4)]-alpha-D-Man-(1-&gt;3)-[alpha-D-Man-(1-&gt;3)-{alpha-D-Man-(1-&gt;6)}-alpha-D-Man-(1-&gt;6)]-beta-D-Man-(1-&gt;4)-beta-D-GlcNAc-(1-&gt;4)-beta-D-GlcNAc}-asparaginyl-[protein] + UDP + H(+). It carries out the reaction N(4)-{beta-D-GlcNAc-(1-&gt;2)-alpha-D-Man-(1-&gt;3)-beta-D-Man-(1-&gt;4)-beta-D-GlcNAc-(1-&gt;4)-beta-D-GlcNAc}-asparaginyl-[protein] + UDP-N-acetyl-alpha-D-glucosamine = N(4)-{beta-D-GlcNAc-(1-&gt;2)-[beta-D-GlcNAc-(1-&gt;4)]-alpha-D-Man-(1-&gt;3)-beta-D-Man-(1-&gt;4)-beta-D-GlcNAc-(1-&gt;4)-beta-D-GlcNAc}-asparaginyl-[protein] + UDP + H(+). It functions in the pathway protein modification; protein glycosylation. Inhibited by UDP. In terms of biological role, glycosyltransferase that catalyze the transfer of GlcNAc from UDP-GlcNAc to the GlcNAcbeta1-2Manalpha1-3 arm of the core structure of N-linked glycans through a beta1-4 linkage and participates in the production of tri- and tetra-antennary N-linked sugar chains. Involved in glucose transport by mediating SLC2A2/GLUT2 glycosylation, thereby controlling cell-surface expression of SLC2A2 in pancreatic beta cells. In Pongo abelii (Sumatran orangutan), this protein is Alpha-1,3-mannosyl-glycoprotein 4-beta-N-acetylglucosaminyltransferase A.